A 109-amino-acid chain; its full sequence is Protein GOLVEN 5 (109 aa).

The first 24 residues, 1–24, serve as a signal peptide directing secretion; the sequence is MTNITSSFLCLLILLLFCLSFGYS. The propeptide occupies 25–96; it reads LHGDKDEVLS…EEDDLVAYTA (72 aa). Positions 54–88 are disordered; the sequence is KKAQVRGRSGQEFSKETTKMMMKKTTKKETNVEEE. A Sulfotyrosine modification is found at Y98. Hydroxyproline is present on P106.

It belongs to the RGF family. Binds to LRR receptor-like serine/threonine-protein kinases RGI1, RGI2 and RGI3 to trigger their dimerization with SERK proteins and subsequent signaling. As to expression, expressed in root tips.

The protein resides in the secreted. Its function is as follows. Signaling peptide (root growth factor) that maintains the postembryonic root stem cell niche in a PIN2-traffic dependent manner. Root growth factor that regulates the pattern of root growth and lateral root development by modulating the length and the number of cortical cells in the root apical meristem (RAM), and the anticlinal asymmetric cell divisions in lateral root initiation cells. Influences the longitudinal growth rate in the primary root in response to phosphate ion (Pi)-deprivation. This is Protein GOLVEN 5 from Arabidopsis thaliana (Mouse-ear cress).